A 395-amino-acid polypeptide reads, in one-letter code: E3 ubiquitin-protein ligase NHLRC1 (395 aa).

The RING-type zinc-finger motif lies at C26–R72. 6 NHL repeats span residues A113–G157, A161–F204, G205–D245, E248–S300, M301–P349, and E350–D393.

As to quaternary structure, interacts with AGL. Interacts (via the NHL repeats) with EPM2A/laforin. Forms a complex with EPM2A/laforin and HSP70. Interacts with PRDM8. Expressed in brain, cerebellum, spinal cord, medulla, heart, liver, skeletal muscle and pancreas.

Its subcellular location is the endoplasmic reticulum. It is found in the nucleus. It carries out the reaction S-ubiquitinyl-[E2 ubiquitin-conjugating enzyme]-L-cysteine + [acceptor protein]-L-lysine = [E2 ubiquitin-conjugating enzyme]-L-cysteine + N(6)-ubiquitinyl-[acceptor protein]-L-lysine.. It participates in protein modification; protein ubiquitination. In terms of biological role, E3 ubiquitin-protein ligase. Together with the phosphatase EPM2A/laforin, appears to be involved in the clearance of toxic polyglucosan and protein aggregates via multiple pathways. In complex with EPM2A/laforin and HSP70, suppresses the cellular toxicity of misfolded proteins by promoting their degradation through the ubiquitin-proteasome system (UPS). Ubiquitinates the glycogen-targeting protein phosphatase subunits PPP1R3C/PTG and PPP1R3D in a laforin-dependent manner and targets them for proteasome-dependent degradation, thus decreasing glycogen accumulation. Polyubiquitinates EPM2A/laforin and ubiquitinates AGL and targets them for proteasome-dependent degradation. Also promotes proteasome-independent protein degradation through the macroautophagy pathway. This is E3 ubiquitin-protein ligase NHLRC1 (NHLRC1) from Homo sapiens (Human).